A 206-amino-acid chain; its full sequence is ATP-dependent Clp protease proteolytic subunit 1 (206 aa).

The active-site Nucleophile is Ser-100. The active site involves His-125.

The protein belongs to the peptidase S14 family. Fourteen ClpP subunits assemble into 2 heptameric rings which stack back to back to give a disk-like structure with a central cavity, resembling the structure of eukaryotic proteasomes.

It localises to the cytoplasm. The catalysed reaction is Hydrolysis of proteins to small peptides in the presence of ATP and magnesium. alpha-casein is the usual test substrate. In the absence of ATP, only oligopeptides shorter than five residues are hydrolyzed (such as succinyl-Leu-Tyr-|-NHMec, and Leu-Tyr-Leu-|-Tyr-Trp, in which cleavage of the -Tyr-|-Leu- and -Tyr-|-Trp bonds also occurs).. Its function is as follows. Cleaves peptides in various proteins in a process that requires ATP hydrolysis. Has a chymotrypsin-like activity. Plays a major role in the degradation of misfolded proteins. The protein is ATP-dependent Clp protease proteolytic subunit 1 of Myxococcus xanthus (strain DK1622).